Consider the following 247-residue polypeptide: MLKATISADIFKDTVDALSALVTECRLHFSETEVWARAVDTANVAMIILTLKKEAFSQFEATTGEIGLDIAKLKNTYSMMGKASDIRLEHQEGANKIEVTFEGYHYSITLLDSNTIKKDPNAPGIQLPGQVTISGSELYNVIKSASIVSDKIWFAIEPEKKEFVLYAEGDSDNIRRAFSAGEVIASNWEPAKSLFSIDYLKDMGKVMSHAEKVTIDLGVDHPVKFSFEIAGGNGQVEYLLAPRIEAD.

It belongs to the PCNA family. In terms of assembly, homotrimer. The subunits circularize to form a toroid; DNA passes through its center. Replication factor C (RFC) is required to load the toroid on the DNA.

Sliding clamp subunit that acts as a moving platform for DNA processing. Responsible for tethering the catalytic subunit of DNA polymerase and other proteins to DNA during high-speed replication. This is DNA polymerase sliding clamp from Methanospirillum hungatei JF-1 (strain ATCC 27890 / DSM 864 / NBRC 100397 / JF-1).